Reading from the N-terminus, the 294-residue chain is Beta-glucoside kinase (294 aa).

5 to 11 provides a ligand contact to ATP; the sequence is AFDIGGT.

Belongs to the ROK (NagC/XylR) family.

The enzyme catalyses D-cellobiose + ATP = 6-phospho-beta-D-glucosyl-(1-&gt;4)-D-glucose + ADP + H(+). Catalyzes the ATP-dependent phosphorylation of cellobiose to produce cellobiose-6'-P. May have a dual role of kinase and transcriptional regulator of the cellobiose-PTS operon. The sequence is that of Beta-glucoside kinase (bglK) from Listeria innocua serovar 6a (strain ATCC BAA-680 / CLIP 11262).